A 78-amino-acid polypeptide reads, in one-letter code: D-alanyl carrier protein (78 aa).

Residues 1–78 (MDFKQEVLDV…NIVNQLSELK (78 aa)) enclose the Carrier domain. Ser-36 carries the post-translational modification O-(pantetheine 4'-phosphoryl)serine.

The protein belongs to the DltC family. 4'-phosphopantetheine is transferred from CoA to a specific serine of apo-DCP.

The protein localises to the cytoplasm. The protein operates within cell wall biogenesis; lipoteichoic acid biosynthesis. In terms of biological role, carrier protein involved in the D-alanylation of lipoteichoic acid (LTA). The loading of thioester-linked D-alanine onto DltC is catalyzed by D-alanine--D-alanyl carrier protein ligase DltA. The DltC-carried D-alanyl group is further transferred to cell membrane phosphatidylglycerol (PG) by forming an ester bond, probably catalyzed by DltD. D-alanylation of LTA plays an important role in modulating the properties of the cell wall in Gram-positive bacteria, influencing the net charge of the cell wall. In Bacillus subtilis (strain 168), this protein is D-alanyl carrier protein.